The following is a 184-amino-acid chain: UPF0149 protein PputGB1_5261 (184 aa).

Belongs to the UPF0149 family.

The polypeptide is UPF0149 protein PputGB1_5261 (Pseudomonas putida (strain GB-1)).